The sequence spans 1238 residues: Erythroid differentiation-related factor 1 (1238 aa).

Disordered regions lie at residues 1 to 38 (MGDAKEAGAEGPPAGAAARGGLSLLSQGESEESSAQGS), 220 to 268 (QPVS…GSEP), 517 to 561 (PKKE…SDDS), and 620 to 647 (KKESDLPAADPSTPIPLKYEDESSRGGP). 3 stretches are compositionally biased toward low complexity: residues 9–38 (AEGPPAGAAARGGLSLLSQGESEESSAQGS), 223–241 (SSTAEQQESSSSDQTNDSE), and 253–263 (SSVSEDPSASS). Acidic residues predominate over residues 530–547 (NSDESYSEEEEEMPDSDE). 2 TPR repeats span residues 693–726 (SKAYYVLSDAAMSLQKYGRALRYIKLALQSHDTY) and 914–953 (AQAHCGAGDELKREFSPEEGLYYNKAIDYYLKALRSLGTR).

It localises to the nucleus. In terms of biological role, transcription factor involved in erythroid differentiation. Involved in transcriptional activation of the globin gene. This is Erythroid differentiation-related factor 1 (EDRF1) from Homo sapiens (Human).